We begin with the raw amino-acid sequence, 340 residues long: Glyceraldehyde-3-phosphate dehydrogenase, cytosolic (340 aa).

NAD(+)-binding positions include 16-17 (RI), aspartate 38, and arginine 85. D-glyceraldehyde 3-phosphate-binding positions include 156-158 (SCT), threonine 187, 216-217 (TG), and arginine 239. Cysteine 157 functions as the Nucleophile in the catalytic mechanism. Asparagine 321 is an NAD(+) binding site.

The protein belongs to the glyceraldehyde-3-phosphate dehydrogenase family. Homotetramer.

It localises to the cytoplasm. It catalyses the reaction D-glyceraldehyde 3-phosphate + phosphate + NAD(+) = (2R)-3-phospho-glyceroyl phosphate + NADH + H(+). It functions in the pathway carbohydrate degradation; glycolysis; pyruvate from D-glyceraldehyde 3-phosphate: step 1/5. Key enzyme in glycolysis that catalyzes the first step of the pathway by converting D-glyceraldehyde 3-phosphate (G3P) into 3-phospho-D-glyceroyl phosphate. Essential for the maintenance of cellular ATP levels and carbohydrate metabolism. This chain is Glyceraldehyde-3-phosphate dehydrogenase, cytosolic, found in Ginkgo biloba (Ginkgo).